The primary structure comprises 41 residues: Diuretic hormone 1 (41 aa).

Isoleucine 41 carries the isoleucine amide modification.

The protein resides in the secreted. Functionally, regulation of fluid secretion. May stimulate primary urine secretion by Malpighian tubules and causes a dose-dependent stimulation of cAMP levels in the tubules. The sequence is that of Diuretic hormone 1 from Hyles lineata (White-lined sphinx moth).